Here is a 361-residue protein sequence, read N- to C-terminus: MRKFTILLMLLLASSAQAARIKDVAQVAGVRNNQLVGYGLVTGLPGTGESTPFTDQSFNAMLQSFGIQLPPGTKPKTKNVAAVIVTADLPAFSKQGQTIDITVSSIGSAKSLRGGTLMQTFLKGLDGQVYAVAQGNLVVSGFSATGADGSKIVGNNPTVGMISSGAIVEREVPNPFGRGDYITFNLFESDFTTAQRLADAVNQFLGPQMASAVDAASIKVRAPRDLSQRVAFLSAIENLEFNPADSAAKIIVNSRTGTIVVGQNVRLKPAAVTHGGMTVAIKENLNVSQPNALGGGQTVVVPNTEIEVTEKQGKMFKLEPGVTLDDLVRAVNEVGAAPSDLMAILQALKQAGAIEGQLIII.

An N-terminal signal peptide occupies residues 1–18 (MRKFTILLMLLLASSAQA).

Belongs to the FlgI family. In terms of assembly, the basal body constitutes a major portion of the flagellar organelle and consists of four rings (L,P,S, and M) mounted on a central rod.

Its subcellular location is the periplasm. It is found in the bacterial flagellum basal body. Assembles around the rod to form the L-ring and probably protects the motor/basal body from shearing forces during rotation. The protein is Flagellar P-ring protein of Vibrio cholerae serotype O1 (strain ATCC 39541 / Classical Ogawa 395 / O395).